Here is a 481-residue protein sequence, read N- to C-terminus: E3 ubiquitin-protein ligase makorin-1 (481 aa).

C3H1-type zinc fingers lie at residues 55 to 82 (WTKQVTCRYFMHGVCKEGDNCRYSHDLS), 84 to 111 (SPYGVVCKYFQRGYCVYGDRCRYEHSKP), and 208 to 235 (ETKKQLCPYAAVGECRYGENCVYLHGDS). The tract at residues 236–263 (CDMCGLQVLHPVDAAQRSQHIKSCIEAH) is makorin-type Cys-His. An RING-type zinc finger spans residues 281–335 (CGICMEVVYEKANPSERRFGILSNCNHTYCLKCIRKWRSAKQFESKIIKSCPECR). The C3H1-type 4 zinc-finger motif lies at 364–393 (AMSNKACRYFDEGRGSCPFGGNCFYKHAYP).

As to quaternary structure, interacts with p53/TP53 and CDKN1A. Interacts with TERT, modulating telomere length homeostasis. In terms of processing, auto-ubiquitinated; which leads to proteasomal degradation. As to expression, highly expressed in embryo, in specific cell types of the central nervous system, in brain with the strongest levels of expression in the mantle layers and in testis. Moderate to low levels in somatic tissues.

It carries out the reaction S-ubiquitinyl-[E2 ubiquitin-conjugating enzyme]-L-cysteine + [acceptor protein]-L-lysine = [E2 ubiquitin-conjugating enzyme]-L-cysteine + N(6)-ubiquitinyl-[acceptor protein]-L-lysine.. It participates in protein modification; protein ubiquitination. E3 ubiquitin ligase catalyzing the covalent attachment of ubiquitin moieties onto substrate proteins. These substrates include FILIP1, p53/TP53, CDKN1A and TERT. Keeps cells alive by suppressing p53/TP53 under normal conditions, but stimulates apoptosis by repressing CDKN1A under stress conditions. Acts as a negative regulator of telomerase. Has negative and positive effects on RNA polymerase II-dependent transcription. In Mus musculus (Mouse), this protein is E3 ubiquitin-protein ligase makorin-1 (Mkrn1).